The sequence spans 353 residues: Endophilin-A1 (353 aa).

The interval 1–21 (MSVAGLKKQFHKATQKVSEKV) is membrane-binding amphipathic helix. The interval 1 to 27 (MSVAGLKKQFHKATQKVSEKVGGAEGT) is disordered. The tract at residues 1–125 (MSVAGLKKQF…DVGEAMKELS (125 aa)) is binds and tubulates liposomes. The BAR domain occupies 18 to 249 (SEKVGGAEGT…LEDRIKEASS (232 aa)). The interval 60–87 (PNPASRAKLSMINTMSKIRGQEKGPGYP) is required for dimerization upon membrane association. A coiled-coil region spans residues 181–201 (EELRQALEKFDESKEIAESSM). A compositionally biased stretch (basic and acidic residues) spans 243–257 (RIKEASSQPKREYQP). The segment at 243 to 290 (RIKEASSQPKREYQPKPRMSLDFTSGGDNTQHNGGISHATTPKPAGAH) is disordered. Residues 264-282 (DFTSGGDNTQHNGGISHAT) show a composition bias toward polar residues. An SH3 domain is found at 291–350 (MDQPCCRALYDFEPENEGELGFKEGDIITLTNQIDENWYEGMLHGQSGFFPINYVDILVP).

This sequence belongs to the endophilin family. As to quaternary structure, monomer; in cytoplasm. Homodimer; when associated with membranes. Associates with MAP4K3. This interaction appears to regulate MAP4K3-mediated JNK activation. Interacts with SYNJ1 and DNM1. As to expression, highly expressed in brain.

The protein resides in the cytoplasm. Its subcellular location is the membrane. It is found in the early endosome. The protein localises to the presynapse. Its function is as follows. Implicated in synaptic vesicle endocytosis. May recruit other proteins to membranes with high curvature. This chain is Endophilin-A1, found in Gallus gallus (Chicken).